The sequence spans 601 residues: Elongation factor 4 (601 aa).

Residues 6-188 (DHIRNFSIVA…AIVHQLPPPR (183 aa)) enclose the tr-type G domain. Residues 18-23 (DHGKST) and 135-138 (NKVD) each bind GTP.

It belongs to the TRAFAC class translation factor GTPase superfamily. Classic translation factor GTPase family. LepA subfamily.

The protein localises to the cell inner membrane. The catalysed reaction is GTP + H2O = GDP + phosphate + H(+). Its function is as follows. Required for accurate and efficient protein synthesis under certain stress conditions. May act as a fidelity factor of the translation reaction, by catalyzing a one-codon backward translocation of tRNAs on improperly translocated ribosomes. Back-translocation proceeds from a post-translocation (POST) complex to a pre-translocation (PRE) complex, thus giving elongation factor G a second chance to translocate the tRNAs correctly. Binds to ribosomes in a GTP-dependent manner. This chain is Elongation factor 4, found in Mesorhizobium japonicum (strain LMG 29417 / CECT 9101 / MAFF 303099) (Mesorhizobium loti (strain MAFF 303099)).